We begin with the raw amino-acid sequence, 354 residues long: UDP-N-acetylglucosamine--N-acetylmuramyl-(pentapeptide) pyrophosphoryl-undecaprenol N-acetylglucosamine transferase (354 aa).

UDP-N-acetyl-alpha-D-glucosamine-binding positions include 15-17 (TGG), N127, R163, S191, I244, 263-268 (ALTVSE), and Q288.

It belongs to the glycosyltransferase 28 family. MurG subfamily.

It is found in the cell inner membrane. It catalyses the reaction di-trans,octa-cis-undecaprenyl diphospho-N-acetyl-alpha-D-muramoyl-L-alanyl-D-glutamyl-meso-2,6-diaminopimeloyl-D-alanyl-D-alanine + UDP-N-acetyl-alpha-D-glucosamine = di-trans,octa-cis-undecaprenyl diphospho-[N-acetyl-alpha-D-glucosaminyl-(1-&gt;4)]-N-acetyl-alpha-D-muramoyl-L-alanyl-D-glutamyl-meso-2,6-diaminopimeloyl-D-alanyl-D-alanine + UDP + H(+). The protein operates within cell wall biogenesis; peptidoglycan biosynthesis. Functionally, cell wall formation. Catalyzes the transfer of a GlcNAc subunit on undecaprenyl-pyrophosphoryl-MurNAc-pentapeptide (lipid intermediate I) to form undecaprenyl-pyrophosphoryl-MurNAc-(pentapeptide)GlcNAc (lipid intermediate II). The polypeptide is UDP-N-acetylglucosamine--N-acetylmuramyl-(pentapeptide) pyrophosphoryl-undecaprenol N-acetylglucosamine transferase (Aliivibrio fischeri (strain MJ11) (Vibrio fischeri)).